The primary structure comprises 241 residues: MWTVRTEGGHFPLHSPTFSWRNVAFLLLLSLALEWTSAMLTKKIKHKPGLCPKERLTCTTELPDSCNTDFDCKEYQKCCFFACQKKCMDPFQEPCMLPVRHGNCNHEAQRWHFDFKNYRCTPFKYRGCEGNANNFLNEDACRTACMLIVKDGQCPLFPFTERKECPPSCHSDIDCPQTDKCCESRCGFVCARAWTVKKGFCPRKPLLCTKIDKPKCLQDEECPLVEKCCSHCGLKCMDPRR.

An N-terminal signal peptide occupies residues 1 to 38; that stretch reads MWTVRTEGGHFPLHSPTFSWRNVAFLLLLSLALEWTSA. The 48-residue stretch at 44-91 folds into the WAP 1 domain; the sequence is IKHKPGLCPKERLTCTTELPDSCNTDFDCKEYQKCCFFACQKKCMDPF. 15 disulfides stabilise this stretch: cysteine 51–cysteine 79, cysteine 58–cysteine 83, cysteine 66–cysteine 78, cysteine 72–cysteine 87, cysteine 95–cysteine 145, cysteine 104–cysteine 128, cysteine 120–cysteine 141, cysteine 154–cysteine 182, cysteine 165–cysteine 186, cysteine 169–cysteine 181, cysteine 175–cysteine 190, cysteine 201–cysteine 229, cysteine 208–cysteine 232, cysteine 216–cysteine 228, and cysteine 222–cysteine 236. Residues 95 to 145 enclose the BPTI/Kunitz inhibitor domain; that stretch reads CMLPVRHGNCNHEAQRWHFDFKNYRCTPFKYRGCEGNANNFLNEDACRTAC. 2 WAP domains span residues 147–194 and 195–240; these read LIVK…ARAW and TVKK…MDPR.

In terms of tissue distribution, expressed ubiquitously, the highest levels are found in the epididymis followed by testis and trachea.

It is found in the secreted. This is WAP four-disulfide core domain protein 8 (WFDC8) from Homo sapiens (Human).